Here is a 96-residue protein sequence, read N- to C-terminus: MITIPTEVKILEETDNLIKVQFKGETHTLFNALKEIAYTINGVKKAAYFIEHPLKDNNYFIIETDGSIKARDALIQALKKLKEELLNFKDWYYSNL.

This sequence belongs to the archaeal Rpo11/eukaryotic RPB11/RPC19 RNA polymerase subunit family. As to quaternary structure, part of the RNA polymerase complex.

Its subcellular location is the cytoplasm. The enzyme catalyses RNA(n) + a ribonucleoside 5'-triphosphate = RNA(n+1) + diphosphate. Its function is as follows. DNA-dependent RNA polymerase (RNAP) catalyzes the transcription of DNA into RNA using the four ribonucleoside triphosphates as substrates. This Nanoarchaeum equitans (strain Kin4-M) protein is DNA-directed RNA polymerase subunit Rpo11.